Here is a 393-residue protein sequence, read N- to C-terminus: tRNA(Met) cytidine acetate ligase (393 aa).

Residues Gly-81, Asn-142, and Arg-167 each coordinate ATP.

Belongs to the TmcAL family.

The protein localises to the cytoplasm. The catalysed reaction is cytidine(34) in elongator tRNA(Met) + acetate + ATP = N(4)-acetylcytidine(34) in elongator tRNA(Met) + AMP + diphosphate. Its function is as follows. Catalyzes the formation of N(4)-acetylcytidine (ac(4)C) at the wobble position of elongator tRNA(Met), using acetate and ATP as substrates. First activates an acetate ion to form acetyladenylate (Ac-AMP) and then transfers the acetyl group to tRNA to form ac(4)C34. In Bacillus thuringiensis subsp. konkukian (strain 97-27), this protein is tRNA(Met) cytidine acetate ligase.